Consider the following 321-residue polypeptide: Probable membrane-associated kinase regulator 3 (321 aa).

The segment covering 297 to 314 (KSNVTESELCSSRTSVST) has biased composition (polar residues). The interval 297-321 (KSNVTESELCSSRTSVSTCGDLDKD) is disordered.

It localises to the cell membrane. This Arabidopsis thaliana (Mouse-ear cress) protein is Probable membrane-associated kinase regulator 3 (MAKR3).